A 144-amino-acid chain; its full sequence is Protein D (144 aa).

This chain is Protein D (D), found in Escherichia coli.